A 596-amino-acid chain; its full sequence is Beta-fructofuranosidase, insoluble isoenzyme 6 (596 aa).

The first 25 residues, 1–25, serve as a signal peptide directing secretion; it reads MALAGLPLSVFAIAVHFCLVFSSSS. Substrate-binding positions include 49-52, Gln-68, and Trp-76; that span reads WQND. Asp-52 is an active-site residue. Asn-80 carries an N-linked (GlcNAc...) asparagine glycan. Substrate-binding positions include 113 to 114, 177 to 178, and Glu-232; these read AS and RD. A glycan (N-linked (GlcNAc...) asparagine) is linked at Asn-335. Cys-436 and Cys-482 are oxidised to a cystine. The N-linked (GlcNAc...) asparagine glycan is linked to Asn-556.

It belongs to the glycosyl hydrolase 32 family. In terms of tissue distribution, expressed in roots. Weakly expressed in flowers.

The protein resides in the secreted. The protein localises to the extracellular space. Its subcellular location is the apoplast. It localises to the cell wall. The enzyme catalyses Hydrolysis of terminal non-reducing beta-D-fructofuranoside residues in beta-D-fructofuranosides.. In Oryza sativa subsp. japonica (Rice), this protein is Beta-fructofuranosidase, insoluble isoenzyme 6 (CIN6).